The sequence spans 75 residues: Anionic peptide (75 aa).

An N-terminal signal peptide occupies residues 1-24; sequence MVSKSLIVLLLVSVLVSTFYTSEA.

Belongs to the non-disulfide-bridged peptide (NDBP) superfamily. As to expression, expressed by the venom gland.

The protein resides in the secreted. The protein is Anionic peptide of Tityus discrepans (Venezuelan scorpion).